The primary structure comprises 260 residues: Dolichol-phosphate mannosyltransferase subunit 1 (260 aa).

The disordered stretch occupies residues 1-20 (MAAEEASRSSPRFRREPKGR). Ala2 carries the N-acetylalanine modification. Position 9 is a phosphoserine (Ser9). Residues Pro32, Tyr34, Glu36, Ile63, Asp65, Asp118, Ala119, Asp120, Arg147, Arg234, and Lys240 each coordinate GDP-alpha-D-mannose. Asp120 provides a ligand contact to Mg(2+). Residue Asp120 coordinates Mn(2+).

Belongs to the glycosyltransferase 2 family. As to quaternary structure, component of the dolichol-phosphate mannose (DPM) synthase complex composed of DPM1, DPM2 and DPM3; within the complex, directly interacts with DPM3. This interaction may stabilize DPM1. Mg(2+) is required as a cofactor. Requires Mn(2+) as cofactor. The cofactor is Ca(2+).

It localises to the endoplasmic reticulum. It catalyses the reaction a di-trans,poly-cis-dolichyl phosphate + GDP-alpha-D-mannose = a di-trans,poly-cis-dolichyl beta-D-mannosyl phosphate + GDP. The protein operates within protein modification; protein glycosylation. Its function is as follows. Transfers mannose from GDP-mannose to dolichol monophosphate to form dolichol phosphate mannose (Dol-P-Man) which is the mannosyl donor in pathways leading to N-glycosylation, glycosyl phosphatidylinositol membrane anchoring, and O-mannosylation of proteins; catalytic subunit of the dolichol-phosphate mannose (DPM) synthase complex. In Bos taurus (Bovine), this protein is Dolichol-phosphate mannosyltransferase subunit 1 (DPM1).